Consider the following 620-residue polypeptide: Mitochondrial Rho GTPase 2 (620 aa).

Residues 1-594 (MKRDVRILLL…ELHTTSFWLR (594 aa)) are Cytoplasmic-facing. Positions 2–168 (KRDVRILLLG…FYYAQKAVLH (167 aa)) constitute a Miro 1 domain. Positions 16, 17, 18, and 19 each coordinate GTP. Thr-18 contributes to the Mg(2+) binding site. The Mg(2+) site is built by Pro-35 and Asp-57. Ser-59 is a GTP binding site. Lys-96 is covalently cross-linked (Glycyl lysine isopeptide (Lys-Gly) (interchain with G-Cter in ubiquitin)). Residues Asn-118, Lys-119, Asp-121, Ala-149, and Lys-150 each coordinate GTP. A Glycyl lysine isopeptide (Lys-Gly) (interchain with G-Cter in ubiquitin) cross-link involves residue Lys-119. A Glycyl lysine isopeptide (Lys-Gly) (interchain with G-Cter in ubiquitin) cross-link involves residue Lys-164. 2 consecutive EF-hand domains span residues 184–219 (ACAQALTRIFRLSDQDMDQALSDQELNAFQTCCFGH) and 304–339 (HGYQFAQRMLEKHDQDRDGALSPAELESLFSVFPGP). The Ca(2+) site is built by Asp-197, Asp-199, Asp-201, Glu-208, Asp-317, Asp-319, Asp-321, and Glu-328. Residues 340–364 (PWGPQLPRHRPHRGRSAAPARVPLP) are disordered. The region spanning 415-578 (RNVLLCKVLG…FARLATMATF (164 aa)) is the Miro 2 domain. Residues Gly-427, Gly-429, Lys-430, and Ser-431 each coordinate GTP. Mg(2+) is bound by residues Ser-431 and Glu-473. GTP contacts are provided by Lys-527, Asp-529, and Cys-558. The chain crosses the membrane as a helical; Anchor for type IV membrane protein span at residues 595–617 (VALGAVGAAVAAILSFSLYRVLV). At 618-620 (KSR) the chain is on the mitochondrial intermembrane side.

This sequence belongs to the mitochondrial Rho GTPase family. Homodimer. Interacts with the kinesin-binding proteins TRAK1/OIP106 and TRAK2/GRIF1, forming a link between mitochondria and the trafficking apparatus of the microtubules. Interacts with ARMCX3. Found in a complex with KIF5B, OGT, RHOT1 and TRAK1. Post-translationally, ubiquitinated by PRKN in a PINK1-dependent manner, leading to its degradation.

Its subcellular location is the mitochondrion outer membrane. The enzyme catalyses GTP + H2O = GDP + phosphate + H(+). The catalysed reaction is ATP + H2O = ADP + phosphate + H(+). It carries out the reaction UTP + H2O = UDP + phosphate + H(+). Atypical mitochondrial nucleoside-triphosphatase (NTPase) involved in mitochondrial trafficking. Probably involved in control of anterograde transport of mitochondria and their subcellular distribution. Can hydrolyze GTP, ATP and UTP. The protein is Mitochondrial Rho GTPase 2 (RHOT2) of Sus scrofa (Pig).